Reading from the N-terminus, the 1741-residue chain is DNA-directed RNA polymerase III subunit RPC1 (1741 aa).

Zn(2+) contacts are provided by Cys-79, Cys-82, Cys-89, His-92, Cys-119, Cys-122, and Cys-160. The Mg(2+) site is built by Asp-722, Asp-724, and Asp-726. A bridging helix region spans residues 1099–1111 (PFEFLAHARAGRD). The segment at 1719–1741 (RHANKRSWSRGKERHASLKPKNR) is disordered.

Belongs to the RNA polymerase beta' chain family. Component of the RNA polymerase III (Pol III) complex consisting of 17 subunits.

The protein localises to the nucleus. It carries out the reaction RNA(n) + a ribonucleoside 5'-triphosphate = RNA(n+1) + diphosphate. Its function is as follows. DNA-dependent RNA polymerase catalyzes the transcription of DNA into RNA using the four ribonucleoside triphosphates as substrates. Largest and catalytic core component of RNA polymerase III which synthesizes small RNAs, such as 5S rRNA and tRNAs. Forms the polymerase active center together with the second largest subunit. A single-stranded DNA template strand of the promoter is positioned within the central active site cleft of Pol III. A bridging helix emanates from RPC1 and crosses the cleft near the catalytic site and is thought to promote translocation of Pol III by acting as a ratchet that moves the RNA-DNA hybrid through the active site by switching from straight to bent conformations at each step of nucleotide addition. This Giardia intestinalis (Giardia lamblia) protein is DNA-directed RNA polymerase III subunit RPC1 (RPOA3).